Reading from the N-terminus, the 160-residue chain is Urease accessory protein UreE (160 aa).

It belongs to the UreE family.

The protein localises to the cytoplasm. Its function is as follows. Involved in urease metallocenter assembly. Binds nickel. Probably functions as a nickel donor during metallocenter assembly. The chain is Urease accessory protein UreE from Acinetobacter baumannii (strain ACICU).